Consider the following 152-residue polypeptide: MQMNHPIYIASDHTGLELKSLVIKHLEQQKLQVIDLGPTELDPLDDYPDYAFLLAQTMQANPNSLGILICGTGVGVCMAANKAKGILAALVVDSKTAALARQHDDANVLCLSSRFVVPEENIKIVDEFLQAQFEGGRHSKRVGKIIAYEREK.

Residue 12–13 participates in D-ribulose 5-phosphate binding; the sequence is DH. C70 (proton acceptor) is an active-site residue. D-ribulose 5-phosphate is bound at residue 71-75; the sequence is GTGVG. H103 acts as the Proton donor in catalysis. D104, R114, R137, and R141 together coordinate D-ribulose 5-phosphate.

It belongs to the LacAB/RpiB family. In terms of assembly, homodimer.

The enzyme catalyses aldehydo-D-ribose 5-phosphate = D-ribulose 5-phosphate. It functions in the pathway carbohydrate degradation; pentose phosphate pathway; D-ribose 5-phosphate from D-ribulose 5-phosphate (non-oxidative stage): step 1/1. Functionally, catalyzes the interconversion of ribulose-5-P and ribose-5-P. The chain is Probable ribose-5-phosphate isomerase B from Mycoplasma pneumoniae (strain ATCC 29342 / M129 / Subtype 1) (Mycoplasmoides pneumoniae).